Consider the following 415-residue polypeptide: 3-isopropylmalate dehydratase large subunit (415 aa).

Cysteine 297, cysteine 355, and cysteine 358 together coordinate [4Fe-4S] cluster.

The protein belongs to the aconitase/IPM isomerase family. LeuC type 2 subfamily. In terms of assembly, heterodimer of LeuC and LeuD. [4Fe-4S] cluster serves as cofactor.

The catalysed reaction is (2R,3S)-3-isopropylmalate = (2S)-2-isopropylmalate. The protein operates within amino-acid biosynthesis; L-leucine biosynthesis; L-leucine from 3-methyl-2-oxobutanoate: step 2/4. Catalyzes the isomerization between 2-isopropylmalate and 3-isopropylmalate, via the formation of 2-isopropylmaleate. The polypeptide is 3-isopropylmalate dehydratase large subunit (Metallosphaera sedula (strain ATCC 51363 / DSM 5348 / JCM 9185 / NBRC 15509 / TH2)).